Consider the following 845-residue polypeptide: Protein P (845 aa).

The segment at 1 to 179 (MPLSYQHFRK…FCGSPYSWEQ (179 aa)) is terminal protein domain (TP). A spacer region spans residues 180 to 348 (ELQHGRLVIK…YCLSHLVNLR (169 aa)). The interval 226-245 (GLQPHQGPLASSQPGRSGSI) is disordered. A polymerase/reverse transcriptase domain (RT) region spans residues 349–692 (EDWGPCDEHG…YMNLYPVARQ (344 aa)). The Reverse transcriptase domain occupies 359 to 602 (EHHIRIPRTP…YSLNFMGYII (244 aa)). 3 residues coordinate Mg(2+): aspartate 431, aspartate 553, and aspartate 554.

This sequence belongs to the hepadnaviridae P protein family.

It catalyses the reaction DNA(n) + a 2'-deoxyribonucleoside 5'-triphosphate = DNA(n+1) + diphosphate. It carries out the reaction Endonucleolytic cleavage to 5'-phosphomonoester.. Activated by host HSP70 and HSP40 in vitro to be able to bind the epsilon loop of the pgRNA. Because deletion of the RNase H region renders the protein partly chaperone-independent, the chaperones may be needed indirectly to relieve occlusion of the RNA-binding site by this domain. Inhibited by several reverse-transcriptase inhibitors: Lamivudine, Adefovir and Entecavir. In terms of biological role, multifunctional enzyme that converts the viral RNA genome into dsDNA in viral cytoplasmic capsids. This enzyme displays a DNA polymerase activity that can copy either DNA or RNA templates, and a ribonuclease H (RNase H) activity that cleaves the RNA strand of RNA-DNA heteroduplexes in a partially processive 3'- to 5'-endonucleasic mode. Neo-synthesized pregenomic RNA (pgRNA) are encapsidated together with the P protein, and reverse-transcribed inside the nucleocapsid. Initiation of reverse-transcription occurs first by binding the epsilon loop on the pgRNA genome, and is initiated by protein priming, thereby the 5'-end of (-)DNA is covalently linked to P protein. Partial (+)DNA is synthesized from the (-)DNA template and generates the relaxed circular DNA (RC-DNA) genome. After budding and infection, the RC-DNA migrates in the nucleus, and is converted into a plasmid-like covalently closed circular DNA (cccDNA). The activity of P protein does not seem to be necessary for cccDNA generation, and is presumably released from (+)DNA by host nuclear DNA repair machinery. In Homo sapiens (Human), this protein is Protein P.